Reading from the N-terminus, the 223-residue chain is Serine/threonine/tyrosine-interacting protein (223 aa).

Residues 28-176 (EMQEVLPGLF…LQEYEAIYLA (149 aa)) form the Tyrosine-protein phosphatase domain. The short motif at 76–78 (FQQ) is the Interaction with FBXW7 element. Phosphoserine occurs at positions 184 and 201. Positions 199-223 (TGSVKRTHEEDDDFGNMQVATAQNG) are disordered.

This sequence belongs to the protein-tyrosine phosphatase family. Non-receptor class subfamily. In terms of assembly, interacts with MAPK1; independently of MAPK1 phosphorylation status. Interacts with CARHSP1/Crhsp-24. Interacts (via FQQ motif) with FBXW7 (via F-box domain); the interaction is direct and prevents FBXW7 interaction with SKP1, a component of the SCF(FBXW7) complex. Widely expressed with highest levels in muscle, testis and brain. In testis, expression starts 13-14 days after birth and is limited to the seminiferous tubule and to round and elongating spermatids. Expression is low in condensing spermatids and pachytene spermatocytes, and absent in spermatogonia, spermatozoa and somatic Sertoli cells.

Its subcellular location is the nucleus. The protein localises to the cytoplasm. It localises to the cytosol. Functionally, catalytically inactive phosphatase. Acts as a nuclear anchor for MAPK1/MAPK3 (ERK1/ERK2). Modulates cell-fate decisions and cell migration by spatiotemporal regulation of MAPK1/MAPK3 (ERK1/ERK2). By binding to the F-box of FBXW7, prevents the assembly of FBXW7 into the SCF E3 ubiquitin-protein ligase complex, and thereby inhibits degradation of its substrates. Plays a role in spermatogenesis. This Mus musculus (Mouse) protein is Serine/threonine/tyrosine-interacting protein.